Reading from the N-terminus, the 847-residue chain is Beta-hexosaminidase (847 aa).

3 cysteine pairs are disulfide-bonded: cysteine 31-cysteine 40, cysteine 377-cysteine 385, and cysteine 484-cysteine 530. Glutamate 519 (proton donor) is an active-site residue.

It belongs to the glycosyl hydrolase 20 family.

It carries out the reaction Hydrolysis of terminal non-reducing N-acetyl-D-hexosamine residues in N-acetyl-beta-D-hexosaminides.. Its pathway is glycan degradation; chitin degradation. Hydrolysis of terminal, non-reducing N-acetyl-beta-D-glucosamine residues in chitobiose and higher analogs, and in glycoproteins. The sequence is that of Beta-hexosaminidase (hex) from Vibrio vulnificus.